Reading from the N-terminus, the 350-residue chain is Phosphoribosylformylglycinamidine cyclo-ligase (350 aa).

The protein belongs to the AIR synthase family.

Its subcellular location is the cytoplasm. The catalysed reaction is 2-formamido-N(1)-(5-O-phospho-beta-D-ribosyl)acetamidine + ATP = 5-amino-1-(5-phospho-beta-D-ribosyl)imidazole + ADP + phosphate + H(+). Its pathway is purine metabolism; IMP biosynthesis via de novo pathway; 5-amino-1-(5-phospho-D-ribosyl)imidazole from N(2)-formyl-N(1)-(5-phospho-D-ribosyl)glycinamide: step 2/2. The protein is Phosphoribosylformylglycinamidine cyclo-ligase of Syntrophotalea carbinolica (strain DSM 2380 / NBRC 103641 / GraBd1) (Pelobacter carbinolicus).